The primary structure comprises 369 residues: DNA replication and repair protein RecF (369 aa).

30 to 37 (GDNAQGKT) serves as a coordination point for ATP.

This sequence belongs to the RecF family.

Its subcellular location is the cytoplasm. Its function is as follows. The RecF protein is involved in DNA metabolism; it is required for DNA replication and normal SOS inducibility. RecF binds preferentially to single-stranded, linear DNA. It also seems to bind ATP. This Streptococcus equi subsp. zooepidemicus (strain MGCS10565) protein is DNA replication and repair protein RecF.